Reading from the N-terminus, the 375-residue chain is Carbamoyl phosphate synthase small chain (375 aa).

Residues 1-185 are CPSase; the sequence is MTQPAILVLE…LNANAFVQAE (185 aa). The L-glutamine site is built by Ser47, Gly237, and Gly239. The region spanning 189–375 is the Glutamine amidotransferase type-1 domain; sequence KVVAYDYGVK…FVASMAEAKS (187 aa). Residue Cys265 is the Nucleophile of the active site. 5 residues coordinate L-glutamine: Leu266, Gln269, Asn307, Gly309, and Phe310. Active-site residues include His349 and Glu351.

It belongs to the CarA family. Composed of two chains; the small (or glutamine) chain promotes the hydrolysis of glutamine to ammonia, which is used by the large (or ammonia) chain to synthesize carbamoyl phosphate. Tetramer of heterodimers (alpha,beta)4.

It catalyses the reaction hydrogencarbonate + L-glutamine + 2 ATP + H2O = carbamoyl phosphate + L-glutamate + 2 ADP + phosphate + 2 H(+). It carries out the reaction L-glutamine + H2O = L-glutamate + NH4(+). Its pathway is amino-acid biosynthesis; L-arginine biosynthesis; carbamoyl phosphate from bicarbonate: step 1/1. The protein operates within pyrimidine metabolism; UMP biosynthesis via de novo pathway; (S)-dihydroorotate from bicarbonate: step 1/3. Small subunit of the glutamine-dependent carbamoyl phosphate synthetase (CPSase). CPSase catalyzes the formation of carbamoyl phosphate from the ammonia moiety of glutamine, carbonate, and phosphate donated by ATP, constituting the first step of 2 biosynthetic pathways, one leading to arginine and/or urea and the other to pyrimidine nucleotides. The small subunit (glutamine amidotransferase) binds and cleaves glutamine to supply the large subunit with the substrate ammonia. This chain is Carbamoyl phosphate synthase small chain, found in Xanthomonas campestris pv. campestris (strain ATCC 33913 / DSM 3586 / NCPPB 528 / LMG 568 / P 25).